A 174-amino-acid chain; its full sequence is Co-chaperone protein HscB (174 aa).

A J domain is found at N2–L74.

The protein belongs to the HscB family. As to quaternary structure, interacts with HscA and stimulates its ATPase activity. Interacts with IscU.

Its function is as follows. Co-chaperone involved in the maturation of iron-sulfur cluster-containing proteins. Seems to help targeting proteins to be folded toward HscA. The polypeptide is Co-chaperone protein HscB (Buchnera aphidicola subsp. Acyrthosiphon pisum (strain 5A)).